The following is a 1342-amino-acid chain: DNA-directed RNA polymerase subunit beta (1342 aa).

The protein belongs to the RNA polymerase beta chain family. The RNAP catalytic core consists of 2 alpha, 1 beta, 1 beta' and 1 omega subunit. When a sigma factor is associated with the core the holoenzyme is formed, which can initiate transcription.

It carries out the reaction RNA(n) + a ribonucleoside 5'-triphosphate = RNA(n+1) + diphosphate. DNA-dependent RNA polymerase catalyzes the transcription of DNA into RNA using the four ribonucleoside triphosphates as substrates. The chain is DNA-directed RNA polymerase subunit beta from Vibrio parahaemolyticus serotype O3:K6 (strain RIMD 2210633).